Here is a 122-residue protein sequence, read N- to C-terminus: UPF0231 protein VF_2154 (122 aa).

It belongs to the UPF0231 family.

The polypeptide is UPF0231 protein VF_2154 (Aliivibrio fischeri (strain ATCC 700601 / ES114) (Vibrio fischeri)).